Reading from the N-terminus, the 144-residue chain is Small ribosomal subunit protein uS9 (144 aa).

At Thr2 the chain carries N-acetylthreonine. Residues 124–144 are disordered; it reads RRESKKFGGPGARARYQKSYR.

This sequence belongs to the universal ribosomal protein uS9 family.

This chain is Small ribosomal subunit protein uS9 (rps-16), found in Caenorhabditis elegans.